Here is a 142-residue protein sequence, read N- to C-terminus: MKNVPYLSAVGAIMYLMVVTRPDLAAAVGVLSQFASDPCPTHWQALKRVLRYLQSTQTYGLEFTRAGTAKLVGYSDADWAGDVESRRSTSGYLFKLNGGCVSWRSKKQRTVALSSTEDEYMALSEATQEAVWLTVRTRRTKG.

Positions 1 to 27 (MKNVPYLSAVGAIMYLMVVTRPDLAAA) are cleaved as a signal peptide. The RxLR signature appears at 48-51 (RVLR).

It belongs to the RxLR effector family.

It is found in the secreted. It localises to the host chloroplast envelope. The protein localises to the host nucleus. Its function is as follows. Secreted effector that completely suppresses the host cell death induced by cell death-inducing proteins. The polypeptide is Secreted RxLR effector protein 161 (Plasmopara viticola (Downy mildew of grapevine)).